The primary structure comprises 556 residues: Urocanate hydratase (556 aa).

NAD(+)-binding positions include 52 to 53, glutamine 130, 176 to 178, glutamate 196, arginine 201, 242 to 243, 263 to 267, 273 to 274, and tyrosine 322; these read GG, GMG, NA, QTSAH, and YL. Cysteine 410 is an active-site residue. Residue glycine 492 coordinates NAD(+).

The protein belongs to the urocanase family. The cofactor is NAD(+).

The protein resides in the cytoplasm. The enzyme catalyses 4-imidazolone-5-propanoate = trans-urocanate + H2O. It participates in amino-acid degradation; L-histidine degradation into L-glutamate; N-formimidoyl-L-glutamate from L-histidine: step 2/3. Its function is as follows. Catalyzes the conversion of urocanate to 4-imidazolone-5-propionate. The sequence is that of Urocanate hydratase from Bradyrhizobium sp. (strain BTAi1 / ATCC BAA-1182).